We begin with the raw amino-acid sequence, 304 residues long: uncharacterized protein (304 aa).

The segment covering 226–244 has biased composition (polar residues); that stretch reads SRNSESSRQSNLNSPNDSV. The disordered stretch occupies residues 226 to 263; that stretch reads SRNSESSRQSNLNSPNDSVKFNEFNKSNKSTKTNPNNI. The span at 246-262 shows a compositional bias: low complexity; it reads FNEFNKSNKSTKTNPNN.

This is an uncharacterized protein from Acanthamoeba polyphaga (Amoeba).